The following is an 83-amino-acid chain: Small ribosomal subunit protein uS19m (83 aa).

It belongs to the universal ribosomal protein uS19 family.

It is found in the mitochondrion. In Tetraselmis subcordiformis (Marine green alga), this protein is Small ribosomal subunit protein uS19m (RPS19).